The chain runs to 229 residues: Uracil-DNA glycosylase (229 aa).

The active-site Proton acceptor is the Asp-65.

It belongs to the uracil-DNA glycosylase (UDG) superfamily. UNG family.

The protein resides in the cytoplasm. The enzyme catalyses Hydrolyzes single-stranded DNA or mismatched double-stranded DNA and polynucleotides, releasing free uracil.. Its function is as follows. Excises uracil residues from the DNA which can arise as a result of misincorporation of dUMP residues by DNA polymerase or due to deamination of cytosine. This is Uracil-DNA glycosylase from Limosilactobacillus reuteri (strain DSM 20016) (Lactobacillus reuteri).